Here is a 349-residue protein sequence, read N- to C-terminus: D-arabinose 1-dehydrogenase (NADP(+)) (349 aa).

Zn(2+) is bound by residues Cys-46, His-70, Asp-99, Cys-102, Cys-105, Cys-113, and Asp-155.

This sequence belongs to the zinc-containing alcohol dehydrogenase family. Homotetramer. Dimer of dimers. It depends on Zn(2+) as a cofactor.

It carries out the reaction D-arabinose + NADP(+) = D-arabinono-1,4-lactone + NADPH + H(+). Participates in a pentose oxidation pathway that converts D-arabinose to 2-oxoglutarate. Catalyzes the NADP-dependent conversion of D-arabinose to D-arabinono-1,4-lactone. In vitro, can also use L-fucose, L-galactose and D-ribose. Shows highest activity with L-fucose, in combinaison with NAD, and lower activity toward L-galactose and D-ribose. When acting on its physiological substrate, D-arabinose, shows a clear preference for NADP over NAD. The protein is D-arabinose 1-dehydrogenase (NADP(+)) of Saccharolobus solfataricus (strain ATCC 35092 / DSM 1617 / JCM 11322 / P2) (Sulfolobus solfataricus).